The chain runs to 346 residues: Protein pelota homolog (346 aa).

Belongs to the eukaryotic release factor 1 family. Pelota subfamily. In terms of assembly, monomer. Requires a divalent metal cation as cofactor.

It localises to the cytoplasm. May function in recognizing stalled ribosomes, interact with stem-loop structures in stalled mRNA molecules, and effect endonucleolytic cleavage of the mRNA. May play a role in the release non-functional ribosomes and degradation of damaged mRNAs. Has endoribonuclease activity. This chain is Protein pelota homolog, found in Ignicoccus hospitalis (strain KIN4/I / DSM 18386 / JCM 14125).